Here is a 412-residue protein sequence, read N- to C-terminus: Protein MITOFERRINLIKE 1, chloroplastic (412 aa).

A chloroplast-targeting transit peptide spans 1–92 (MEARLSETLG…PGPEFLKWIK (92 aa)). The interval 43 to 83 (VRNPKLKTKSSQKPPKFSANFRRSDPPFASTSISDPTHEKP) is disordered. 3 Solcar repeats span residues 112–198 (ERAI…GKSL), 206–288 (PTVL…LKAA), and 298–392 (LEPL…ARLT). The next 6 helical transmembrane spans lie at 115–135 (IIGA…LLPL), 167–187 (ILGF…SSAV), 208–228 (VLIP…IMVP), 262–282 (AGYS…YSSF), 303–323 (SVCC…PLDV), and 365–385 (TRGM…GYFA).

It belongs to the mitochondrial carrier (TC 2.A.29) family. Expressed in leaves, developing flowers and siliques.

The protein localises to the plastid. The protein resides in the chloroplast inner membrane. Its function is as follows. Probably involved in iron transport into chloroplasts. This Arabidopsis thaliana (Mouse-ear cress) protein is Protein MITOFERRINLIKE 1, chloroplastic (MFL1).